The primary structure comprises 231 residues: Cuticlin 2 (231 aa).

Positions 1 to 16 are cleaved as a signal peptide; it reads MQKLIVFFTTIAAAQA. 12 consecutive repeat copies span residues 75–78, 79–82, 90–93, 105–108, 114–117, 121–124, 137–140, 153–156, 169–172, 192–195, 208–211, and 218–221. Positions 75-221 are 12 X 4 AA repeats of A-A-P-[AVI]; it reads AAPIAAPAGG…AGGYQAAAPA (147 aa).

In terms of processing, tyrosine residues can be cross-linked in vitro, leading to the formation of insoluble high molecular-weight complexes.

The protein resides in the secreted. Its function is as follows. Component of the insoluble part of the cuticles. The polypeptide is Cuticlin 2 (Caenorhabditis elegans).